The chain runs to 51 residues: MRDKIKLESSAGTGHFYTTTKNKRTMPGKLEIKKFDPVARKHVVYKETKLK.

The segment at 1–21 is disordered; the sequence is MRDKIKLESSAGTGHFYTTTK. Residues 10–20 show a composition bias toward polar residues; it reads SAGTGHFYTTT.

Belongs to the bacterial ribosomal protein bL33 family.

This is Large ribosomal subunit protein bL33 (rpmG) from Neisseria meningitidis serogroup A / serotype 4A (strain DSM 15465 / Z2491).